The following is a 412-amino-acid chain: Proline-rich protein 30 (412 aa).

Composition is skewed to polar residues over residues methionine 1–valine 15 and glycine 23–serine 39. Disordered stretches follow at residues methionine 1–serine 88, proline 123–glutamine 174, and arginine 317–valine 412. Low complexity-rich tracts occupy residues proline 50–proline 59, proline 126–proline 142, and glutamine 334–valine 350. Polar residues predominate over residues threonine 353–arginine 372.

This chain is Proline-rich protein 30 (PRR30), found in Homo sapiens (Human).